Here is a 412-residue protein sequence, read N- to C-terminus: Serine hydroxymethyltransferase (412 aa).

(6S)-5,6,7,8-tetrahydrofolate is bound by residues leucine 120 and 124–126 (GHL). N6-(pyridoxal phosphate)lysine is present on lysine 229. 352–354 (SPF) contributes to the (6S)-5,6,7,8-tetrahydrofolate binding site.

This sequence belongs to the SHMT family. As to quaternary structure, homodimer. Requires pyridoxal 5'-phosphate as cofactor.

The protein localises to the cytoplasm. It carries out the reaction (6R)-5,10-methylene-5,6,7,8-tetrahydrofolate + glycine + H2O = (6S)-5,6,7,8-tetrahydrofolate + L-serine. The protein operates within one-carbon metabolism; tetrahydrofolate interconversion. It participates in amino-acid biosynthesis; glycine biosynthesis; glycine from L-serine: step 1/1. Its function is as follows. Catalyzes the reversible interconversion of serine and glycine with tetrahydrofolate (THF) serving as the one-carbon carrier. This reaction serves as the major source of one-carbon groups required for the biosynthesis of purines, thymidylate, methionine, and other important biomolecules. Also exhibits THF-independent aldolase activity toward beta-hydroxyamino acids, producing glycine and aldehydes, via a retro-aldol mechanism. The chain is Serine hydroxymethyltransferase from Acetivibrio thermocellus (strain ATCC 27405 / DSM 1237 / JCM 9322 / NBRC 103400 / NCIMB 10682 / NRRL B-4536 / VPI 7372) (Clostridium thermocellum).